The following is a 313-amino-acid chain: Porphobilinogen deaminase (313 aa).

Cysteine 241 bears the S-(dipyrrolylmethanemethyl)cysteine mark.

It belongs to the HMBS family. In terms of assembly, monomer. It depends on dipyrromethane as a cofactor.

The catalysed reaction is 4 porphobilinogen + H2O = hydroxymethylbilane + 4 NH4(+). It functions in the pathway porphyrin-containing compound metabolism; protoporphyrin-IX biosynthesis; coproporphyrinogen-III from 5-aminolevulinate: step 2/4. In terms of biological role, tetrapolymerization of the monopyrrole PBG into the hydroxymethylbilane pre-uroporphyrinogen in several discrete steps. This is Porphobilinogen deaminase from Idiomarina loihiensis (strain ATCC BAA-735 / DSM 15497 / L2-TR).